The sequence spans 338 residues: tRNA N6-adenosine threonylcarbamoyltransferase (338 aa).

Fe cation is bound by residues His111 and His115. Substrate-binding positions include 134 to 138 (LVSGG), Asp167, Gly180, and Asn272. Residue Asp300 participates in Fe cation binding.

Belongs to the KAE1 / TsaD family. Fe(2+) is required as a cofactor.

It is found in the cytoplasm. The enzyme catalyses L-threonylcarbamoyladenylate + adenosine(37) in tRNA = N(6)-L-threonylcarbamoyladenosine(37) in tRNA + AMP + H(+). Required for the formation of a threonylcarbamoyl group on adenosine at position 37 (t(6)A37) in tRNAs that read codons beginning with adenine. Is involved in the transfer of the threonylcarbamoyl moiety of threonylcarbamoyl-AMP (TC-AMP) to the N6 group of A37, together with TsaE and TsaB. TsaD likely plays a direct catalytic role in this reaction. This is tRNA N6-adenosine threonylcarbamoyltransferase from Shewanella baltica (strain OS223).